Consider the following 1069-residue polypeptide: Regulator of nonsense transcripts 1 (1069 aa).

Positions 1–86 are disordered; sequence MDDSDDEYSR…SEKSLTEEQH (86 aa). Residues 28–50 show a composition bias toward polar residues; it reads IGNTQDSQFAYEQFSVPTQSSQA. The span at 51 to 65 shows a compositional bias: low complexity; sequence TDLLPGGTDGTTNDL. A compositionally biased stretch (basic and acidic residues) spans 77-86; that stretch reads SEKSLTEEQH. Residues 87-244 enclose the Upf1 CH-rich domain; sequence EQKLPEHACR…VRMEELWRDH (158 aa). Zn(2+) contacts are provided by C95, C98, C109, C112, C117, H127, H131, H137, C155, C158, C181, and C185. Residues 95–127 are C3H; the sequence is CRYCGISDPLCVAKCTVCRKWFCNSNDGTSGGH. A CC/SHH/C region spans residues 109 to 137; sequence CTVCRKWFCNSNDGTSGGHIVHHMVRSQH. Residues 155–185 form a C4 region; that stretch reads CYRCGSKNVFNLGFIPGKKDQVVVIICRTPC. ATP is bound by residues Q450, 467–474, Q639, Y676, and E807; that span reads GPPGTGKT. Positions 966–1069 are disordered; that stretch reads ARNQKDRRRG…MDDLLFSQDC (104 aa). A compositionally biased stretch (low complexity) spans 991–1013; it reads SQGMMSQQSQQYPPQGASSQSQY.

Belongs to the DNA2/NAM7 helicase family. Post-translationally, phosphorylated probably by smg-1. Smg-3 and smg-4 are required for phosphorylation.

The protein resides in the cytoplasm. The enzyme catalyses ATP + H2O = ADP + phosphate + H(+). RNA-dependent helicase required for nonsense-mediated decay (NMD) of aberrant mRNAs containing premature stop codons and modulates the expression level of normal mRNAs. Is recruited to mRNAs upon translation termination and undergoes a cycle of phosphorylation and dephosphorylation; its phosphorylation appears to be a key step in NMD. The formation of an smg-2-3-4 surveillance complex is believed to activate NMD. This Caenorhabditis elegans protein is Regulator of nonsense transcripts 1 (smg-2).